We begin with the raw amino-acid sequence, 281 residues long: Merozoite surface protein 2 (281 aa).

An N-terminal signal peptide occupies residues 1–20; it reads MKVIKTLSIINFFIFVTFNI. Residues N22 and N36 are each glycosylated (N-linked (GlcNAc...) asparagine). The tract at residues 42–242 is disordered; that stretch reads SMEESNPPTG…DSQKECTDGN (201 aa). Residues 44–207 are polymorphic region; the sequence is EESNPPTGAS…EQTESPELQS (164 aa). 3 repeat units span residues 51-58, 59-66, and 67-74. A 3 X 8 AA tandem repeats of G-A-S-G-R-A-G-A region spans residues 51–74; it reads GASGRAGAGASGRAGAGASGRAGA. Positions 54–76 are enriched in gly residues; sequence GRAGAGASGRAGAGASGRAGAGA. Residues 77 to 133 are compositionally biased toward low complexity; sequence GAVASAGSGDGAVASAGNGANPGADAKRSTSTPATTTTTTTTNDAEASTSTSSENPN. 2 stretches are compositionally biased toward polar residues: residues 150–174 and 181–209; these read NKAN…NVPP and KSPT…QSAP. N158 carries N-linked (GlcNAc...) asparagine glycosylation. A glycan (N-linked (GlcNAc...) asparagine) is linked at N230. Residues C238 and C246 are joined by a disulfide bond. Residues N254 and N255 are each glycosylated (N-linked (GlcNAc...) asparagine). N255 carries GPI-anchor amidated asparagine lipidation. Residues 256-281 constitute a propeptide, removed in mature form; that stretch reads SSNIASINKFVVLISATLVLSFAIFI.

The protein resides in the cell membrane. In terms of biological role, may play a role in the merozoite attachment to the erythrocyte. The sequence is that of Merozoite surface protein 2 from Plasmodium falciparum (isolate thtn / Thailand).